Consider the following 607-residue polypeptide: Glutamine--fructose-6-phosphate aminotransferase [isomerizing] (607 aa).

C2 serves as the catalytic Nucleophile; for GATase activity. The Glutamine amidotransferase type-2 domain occupies 2-217 (CGIIGIIGND…DGDWAVLTRN (216 aa)). SIS domains are found at residues 283 to 422 (IGID…ARGA) and 455 to 597 (VCHD…VDQP). The active-site For Fru-6P isomerization activity is the K602.

In terms of assembly, homodimer.

Its subcellular location is the cytoplasm. It catalyses the reaction D-fructose 6-phosphate + L-glutamine = D-glucosamine 6-phosphate + L-glutamate. Functionally, catalyzes the first step in hexosamine metabolism, converting fructose-6P into glucosamine-6P using glutamine as a nitrogen source. The sequence is that of Glutamine--fructose-6-phosphate aminotransferase [isomerizing] from Brucella suis biovar 1 (strain 1330).